Here is a 405-residue protein sequence, read N- to C-terminus: Argininosuccinate synthase (405 aa).

11-19 (AYSGGLDTS) provides a ligand contact to ATP. Y90 provides a ligand contact to L-citrulline. G119 is a binding site for ATP. L-aspartate contacts are provided by T121, N125, and D126. Position 125 (N125) interacts with L-citrulline. Positions 129, 178, 187, 263, and 275 each coordinate L-citrulline.

Belongs to the argininosuccinate synthase family. Type 1 subfamily. As to quaternary structure, homotetramer.

It localises to the cytoplasm. The enzyme catalyses L-citrulline + L-aspartate + ATP = 2-(N(omega)-L-arginino)succinate + AMP + diphosphate + H(+). It participates in amino-acid biosynthesis; L-arginine biosynthesis; L-arginine from L-ornithine and carbamoyl phosphate: step 2/3. The polypeptide is Argininosuccinate synthase (Legionella pneumophila (strain Paris)).